The sequence spans 221 residues: 2-C-methyl-D-erythritol 4-phosphate cytidylyltransferase (221 aa).

It belongs to the IspD/TarI cytidylyltransferase family. IspD subfamily.

The catalysed reaction is 2-C-methyl-D-erythritol 4-phosphate + CTP + H(+) = 4-CDP-2-C-methyl-D-erythritol + diphosphate. Its pathway is isoprenoid biosynthesis; isopentenyl diphosphate biosynthesis via DXP pathway; isopentenyl diphosphate from 1-deoxy-D-xylulose 5-phosphate: step 2/6. In terms of biological role, catalyzes the formation of 4-diphosphocytidyl-2-C-methyl-D-erythritol from CTP and 2-C-methyl-D-erythritol 4-phosphate (MEP). In Roseobacter denitrificans (strain ATCC 33942 / OCh 114) (Erythrobacter sp. (strain OCh 114)), this protein is 2-C-methyl-D-erythritol 4-phosphate cytidylyltransferase.